The following is a 297-amino-acid chain: Phosphoribosylaminoimidazole-succinocarboxamide synthase (297 aa).

The protein belongs to the SAICAR synthetase family.

It catalyses the reaction 5-amino-1-(5-phospho-D-ribosyl)imidazole-4-carboxylate + L-aspartate + ATP = (2S)-2-[5-amino-1-(5-phospho-beta-D-ribosyl)imidazole-4-carboxamido]succinate + ADP + phosphate + 2 H(+). It participates in purine metabolism; IMP biosynthesis via de novo pathway; 5-amino-1-(5-phospho-D-ribosyl)imidazole-4-carboxamide from 5-amino-1-(5-phospho-D-ribosyl)imidazole-4-carboxylate: step 1/2. The protein is Phosphoribosylaminoimidazole-succinocarboxamide synthase of Mycobacterium sp. (strain KMS).